The following is a 463-amino-acid chain: Glutamate--tRNA ligase 2 (463 aa).

The 'HIGH' region motif lies at 10–20 (PSPTGFLHIGS). Positions 239-243 (KLSKR) match the 'KMSKS' region motif. K242 is a binding site for ATP.

It belongs to the class-I aminoacyl-tRNA synthetase family. Glutamate--tRNA ligase type 1 subfamily. In terms of assembly, monomer.

Its subcellular location is the cytoplasm. The enzyme catalyses tRNA(Glu) + L-glutamate + ATP = L-glutamyl-tRNA(Glu) + AMP + diphosphate. Functionally, catalyzes the attachment of glutamate to tRNA(Glu) in a two-step reaction: glutamate is first activated by ATP to form Glu-AMP and then transferred to the acceptor end of tRNA(Glu). This Rickettsia felis (strain ATCC VR-1525 / URRWXCal2) (Rickettsia azadi) protein is Glutamate--tRNA ligase 2.